Reading from the N-terminus, the 28-residue chain is Trypsin inhibitor 4 (28 aa).

Cystine bridges form between C2/C19, C9/C21, and C15/C27.

Belongs to the protease inhibitor I7 (squash-type serine protease inhibitor) family.

Its subcellular location is the secreted. In terms of biological role, inhibits trypsin. In Luffa aegyptiaca (Sponge gourd), this protein is Trypsin inhibitor 4.